Consider the following 445-residue polypeptide: MLCYVTRPDAVLMEVEVEAKANGEDCLNQVCRRLGIIEVDYFGLQFTGSKGESLWLNLRNRISQQMDGLAPYRLKLRVKFFVEPHLILQEQTRHIFFLHIKESLLAGHLQCSPEQAVELSALLAQTKFGDYNQNTAQYSYEDLCEKELSSSTLNSIVGKHKELEGISQASAEYQVLQIVSAMENYGIEWHAVRDSEGQKLLIGVGPEGISICKEDFSPINRIAYPVVQMATQSGKNVYLTVTKESGNSIVLLFKMISTRAASGLYRAITETHAFYRCDTVTSAVMMQYSRDLKGHLASLFLNENINLGKKYVFDIKRTSKEVYDHARRALYNAGVVDLVSRNDQSPPSSPLKSSDSSMSCSSCEGLSCQQTRVLQEKLRKLKEAMLCMVCCEEEINSTFCPCGHTVCCESCAAQLQSCPVCRSRVEHVQHVYLPTHTSLLNLTVI.

The region spanning 1 to 279 (MLCYVTRPDA…ETHAFYRCDT (279 aa)) is the FERM domain. Positions 341–363 (RNDQSPPSSPLKSSDSSMSCSSC) are disordered. Positions 350–363 (PLKSSDSSMSCSSC) are enriched in low complexity. The Fe cation site is built by Cys-360, Cys-363, and Cys-368. The segment at 387-422 (CMVCCEEEINSTFCPCGHTVCCESCAAQLQSCPVCR) adopts an RING-type zinc-finger fold. A critical for homodimerization region spans residues 431 to 433 (VYL).

As to quaternary structure, homodimer. Interacts with the E2 ubiquitin-conjugating enzyme, UBE2D1 (via RING-type zinc finger). Interacts with myosin regulatory light chain (MRLC) and TMEM4. Autoubiquitinated. In terms of tissue distribution, expressed in developing and adult brain, hippocampus, cerebellum, cerebral cortex, thalamus and substantia nigra. Predominantly found in neurons.

It localises to the cytoplasm. It is found in the cell membrane. It carries out the reaction S-ubiquitinyl-[E2 ubiquitin-conjugating enzyme]-L-cysteine + [acceptor protein]-L-lysine = [E2 ubiquitin-conjugating enzyme]-L-cysteine + N(6)-ubiquitinyl-[acceptor protein]-L-lysine.. Its pathway is protein modification; protein ubiquitination. With respect to regulation, can bind 1 iron ion per dimer. Iron binding seems to decrease LDLR degradation activity. E3 ubiquitin-protein ligase that mediates ubiquitination and subsequent proteasomal degradation of myosin regulatory light chain (MRLC), LDLR, VLDLR and LRP8. Activity depends on E2 enzymes of the UBE2D family. Proteasomal degradation of MRLC leads to inhibit neurite outgrowth in presence of NGF by counteracting the stabilization of MRLC by saposin-like protein (CNPY2/MSAP) and reducing CNPY2-stimulated neurite outgrowth. Acts as a sterol-dependent inhibitor of cellular cholesterol uptake by mediating ubiquitination and subsequent degradation of LDLR. This Rattus norvegicus (Rat) protein is E3 ubiquitin-protein ligase MYLIP (Mylip).